A 62-amino-acid polypeptide reads, in one-letter code: ATP synthase subunit J, mitochondrial (62 aa).

Residues 13–32 (IVKPLWPYAVGGVITFFLFA) traverse the membrane as a helical segment.

F-type ATP synthases have 2 components, the catalytic core F(1) and the membrane-embedded component F(0), linked together by a central stalk and a peripheral stalk. The central stalk, also called rotor shaft, is often seen as part of F(1). The peripheral stalk is seen as part of F(0). F(0) contains the membrane channel next to the rotor. F-type ATP synthases form dimers but each monomer functions independently in ATP generation. The dimer consists of 17 different polypeptides: ATP1 (subunit alpha, 3 molecules per monomer, part of F(1)), ATP2 (subunit beta, 3 copies per monomer, part of F(1)), ATP3 (subunit gamma, part of the central stalk), ATP4 (subunit b, part of the peripheral stalk), ATP5/OSCP (subunit 5/OSCP, part of the peripheral stalk), ATP6 (subunit a, part of the peripheral stalk), ATP7 (subunit d, part of the peripheral stalk), ATP8 (subunit 8, part of the peripheral stalk), OLI1 (subunit c, part of the rotor, 10 molecules per monomer), ATP14 (subunit h, part of the peripheral stalk), ATP15 (subunit epsilon, part of the central stalk), ATP16 (subunit delta, part of the central stalk), ATP17 (subunit f, part of the peripheral stalk), ATP18 (subunit i/j, part of the peripheral stalk), ATP19 (subunit k, dimer-specific, at interface between monomers), ATP20 (subunit g, at interface between monomers), TIM11 (subunit e, at interface between monomers).

Its subcellular location is the mitochondrion inner membrane. Mitochondrial membrane ATP synthase (F(1)F(0) ATP synthase or Complex V) produces ATP from ADP in the presence of a proton gradient across the membrane which is generated by electron transport complexes of the respiratory chain. F-type ATP synthases consist of two structural domains, F(1) - containing the extramembraneous catalytic core, and F(0) - containing the membrane proton channel, linked together by a central stalk and a peripheral stalk. During catalysis, ATP synthesis in the catalytic domain of F(1) is coupled via a rotary mechanism of the central stalk subunits to proton translocation. Part of the complex F(0) domain. Minor subunit located with subunit a/ATP6 in the membrane. In Yarrowia lipolytica (strain CLIB 122 / E 150) (Yeast), this protein is ATP synthase subunit J, mitochondrial.